Consider the following 476-residue polypeptide: Bifunctional protein HldE (476 aa).

Positions 1–318 (MKPILPDYNS…AEAVHGSQDT (318 aa)) are ribokinase. An ATP-binding site is contributed by 195–198 (NMKE). Residue Asp264 is part of the active site. A cytidylyltransferase region spans residues 344–476 (MTNGCFDILH…IINAIKGGKG (133 aa)).

This sequence in the N-terminal section; belongs to the carbohydrate kinase PfkB family. It in the C-terminal section; belongs to the cytidylyltransferase family. Homodimer.

The enzyme catalyses D-glycero-beta-D-manno-heptose 7-phosphate + ATP = D-glycero-beta-D-manno-heptose 1,7-bisphosphate + ADP + H(+). It carries out the reaction D-glycero-beta-D-manno-heptose 1-phosphate + ATP + H(+) = ADP-D-glycero-beta-D-manno-heptose + diphosphate. It functions in the pathway nucleotide-sugar biosynthesis; ADP-L-glycero-beta-D-manno-heptose biosynthesis; ADP-L-glycero-beta-D-manno-heptose from D-glycero-beta-D-manno-heptose 7-phosphate: step 1/4. The protein operates within nucleotide-sugar biosynthesis; ADP-L-glycero-beta-D-manno-heptose biosynthesis; ADP-L-glycero-beta-D-manno-heptose from D-glycero-beta-D-manno-heptose 7-phosphate: step 3/4. It participates in bacterial outer membrane biogenesis; LPS core biosynthesis. Its function is as follows. Catalyzes the phosphorylation of D-glycero-D-manno-heptose 7-phosphate at the C-1 position to selectively form D-glycero-beta-D-manno-heptose-1,7-bisphosphate. Catalyzes the ADP transfer from ATP to D-glycero-beta-D-manno-heptose 1-phosphate, yielding ADP-D-glycero-beta-D-manno-heptose. This is Bifunctional protein HldE from Vibrio parahaemolyticus serotype O3:K6 (strain RIMD 2210633).